The chain runs to 98 residues: NADH-ubiquinone oxidoreductase chain 4L (98 aa).

3 helical membrane-spanning segments follow: residues methionine 1 to methionine 21, alanine 29 to leucine 49, and isoleucine 61 to isoleucine 81.

It belongs to the complex I subunit 4L family. As to quaternary structure, core subunit of respiratory chain NADH dehydrogenase (Complex I) which is composed of 45 different subunits.

It is found in the mitochondrion inner membrane. The enzyme catalyses a ubiquinone + NADH + 5 H(+)(in) = a ubiquinol + NAD(+) + 4 H(+)(out). In terms of biological role, core subunit of the mitochondrial membrane respiratory chain NADH dehydrogenase (Complex I) which catalyzes electron transfer from NADH through the respiratory chain, using ubiquinone as an electron acceptor. Part of the enzyme membrane arm which is embedded in the lipid bilayer and involved in proton translocation. The sequence is that of NADH-ubiquinone oxidoreductase chain 4L (MT-ND4L) from Delphinapterus leucas (Beluga whale).